The following is a 178-amino-acid chain: Prion-like protein doppel (178 aa).

Residues 1-25 (MRKHLGGCWLAIVCILLFSQLCSVK) form the signal peptide. Positions 27–50 (RGIKHRIKWNRKVLPSTSQVTEAR) are flexible tail. The globular stretch occupies residues 51–154 (TAEIRPGAFI…KHCDFWLERG (104 aa)). 2 disulfide bridges follow: C94–C147 and C108–C142. Residues N98 and N110 are each glycosylated (N-linked (GlcNAc...) asparagine). A cu(2+) binding region spans residues 124-141 (KQDNKLYQRVLWQLIREL). Residue G154 is the site of GPI-anchor amidated glycine attachment. Positions 155–178 (AGLRVTLDQPMMLCLLVFIWFIVK) are cleaved as a propeptide — removed in mature form.

Belongs to the prion family. N-glycosylated. Post-translationally, O-glycosylated. In terms of tissue distribution, strongly expressed in testis. Detected at low levels in ovary, spleen, kidney and mammary gland.

It localises to the cell membrane. In terms of biological role, required for normal acrosome reaction and for normal male fertility. Can bind Cu(2+). In Bos taurus (Bovine), this protein is Prion-like protein doppel (PRND).